The sequence spans 484 residues: Cysteine--tRNA ligase (484 aa).

Cys29 serves as a coordination point for Zn(2+). The short motif at 31-41 (PTVQSAPHIGH) is the 'HIGH' region element. Cys219, His244, and Glu248 together coordinate Zn(2+). The short motif at 275 to 279 (KMSKS) is the 'KMSKS' region element. Lys278 provides a ligand contact to ATP.

Belongs to the class-I aminoacyl-tRNA synthetase family. As to quaternary structure, monomer. Zn(2+) serves as cofactor.

It is found in the cytoplasm. The catalysed reaction is tRNA(Cys) + L-cysteine + ATP = L-cysteinyl-tRNA(Cys) + AMP + diphosphate. This chain is Cysteine--tRNA ligase, found in Clavibacter sepedonicus (Clavibacter michiganensis subsp. sepedonicus).